The chain runs to 185 residues: MAAGVQGESVARNYAEALLVLARKADDAEGWGALLRQVADAINNDVNLSRFLESPRIAAEQKSVVLSKALGDKVPHLFLRFLQQLVKNRRQMLIPAIATEYETLRDAASGIVHARVTVARETGDEEAKMIAERLSKATGKTVVPHFAVDPSILGGVVVRVGDTVMDGSLRRKLGMLRRRMGGTRA.

Belongs to the ATPase delta chain family. In terms of assembly, F-type ATPases have 2 components, F(1) - the catalytic core - and F(0) - the membrane proton channel. F(1) has five subunits: alpha(3), beta(3), gamma(1), delta(1), epsilon(1). F(0) has three main subunits: a(1), b(2) and c(10-14). The alpha and beta chains form an alternating ring which encloses part of the gamma chain. F(1) is attached to F(0) by a central stalk formed by the gamma and epsilon chains, while a peripheral stalk is formed by the delta and b chains.

It is found in the cell inner membrane. Functionally, f(1)F(0) ATP synthase produces ATP from ADP in the presence of a proton or sodium gradient. F-type ATPases consist of two structural domains, F(1) containing the extramembraneous catalytic core and F(0) containing the membrane proton channel, linked together by a central stalk and a peripheral stalk. During catalysis, ATP synthesis in the catalytic domain of F(1) is coupled via a rotary mechanism of the central stalk subunits to proton translocation. This protein is part of the stalk that links CF(0) to CF(1). It either transmits conformational changes from CF(0) to CF(1) or is implicated in proton conduction. This is ATP synthase subunit delta from Gemmatimonas aurantiaca (strain DSM 14586 / JCM 11422 / NBRC 100505 / T-27).